The following is a 130-amino-acid chain: MASPKSPTRPTQQNPQPNFHDFLPTMAGNLGGEGLIGELCNGFELLMDREKGVITFESLRRNAAAVLGLGDLTDEDVRCMIKEGDFDCDGALNQMEFCVLMFRLSPDLMEASRCLVTEVIEEEFGFTRRH.

One can recognise an EF-hand domain in the interval 72 to 107 (LTDEDVRCMIKEGDFDCDGALNQMEFCVLMFRLSPD). Residues aspartate 85, aspartate 87, aspartate 89, and glutamate 96 each coordinate Ca(2+).

Its function is as follows. Potential calcium sensor that binds calcium in vitro. The polypeptide is Calcium-binding protein KRP1 (Arabidopsis thaliana (Mouse-ear cress)).